The following is a 100-amino-acid chain: NADH-quinone oxidoreductase subunit K (100 aa).

The next 3 membrane-spanning stretches (helical) occupy residues 4–24 (TTWV…GLLS), 28–48 (LLFI…LFIA), and 60–80 (IMYL…LALV).

Belongs to the complex I subunit 4L family. In terms of assembly, NDH-1 is composed of 13 different subunits. Subunits NuoA, H, J, K, L, M, N constitute the membrane sector of the complex.

The protein localises to the cell inner membrane. It catalyses the reaction a quinone + NADH + 5 H(+)(in) = a quinol + NAD(+) + 4 H(+)(out). NDH-1 shuttles electrons from NADH, via FMN and iron-sulfur (Fe-S) centers, to quinones in the respiratory chain. The immediate electron acceptor for the enzyme in this species is believed to be ubiquinone. Couples the redox reaction to proton translocation (for every two electrons transferred, four hydrogen ions are translocated across the cytoplasmic membrane), and thus conserves the redox energy in a proton gradient. This chain is NADH-quinone oxidoreductase subunit K, found in Shewanella woodyi (strain ATCC 51908 / MS32).